Reading from the N-terminus, the 329-residue chain is Serine/threonine-protein phosphatase PP2A catalytic subunit (329 aa).

The segment at 1 to 25 (MDNNMEIDAARSPEPHHLSPTTDPG) is disordered. Basic and acidic residues predominate over residues 8 to 17 (DAARSPEPHH). Residues Asp-77, His-79, Asp-105, and Asn-137 each contribute to the Mn(2+) site. Residue His-138 is the Proton donor of the active site. Mn(2+) is bound by residues His-187 and His-261. Residue Leu-329 is modified to Leucine methyl ester.

This sequence belongs to the PPP phosphatase family. PP-2A subfamily. The cofactor is Mn(2+).

It catalyses the reaction O-phospho-L-seryl-[protein] + H2O = L-seryl-[protein] + phosphate. It carries out the reaction O-phospho-L-threonyl-[protein] + H2O = L-threonyl-[protein] + phosphate. Functionally, involved in hyphal morphogenesis. This chain is Serine/threonine-protein phosphatase PP2A catalytic subunit (pphA), found in Emericella nidulans (strain FGSC A4 / ATCC 38163 / CBS 112.46 / NRRL 194 / M139) (Aspergillus nidulans).